Reading from the N-terminus, the 268-residue chain is Small ribosomal subunit protein uS2 (268 aa).

A laminin-binding region spans residues 161-179; the sequence is IPCNNDKYSIALMLWMLAR.

The protein belongs to the universal ribosomal protein uS2 family. As to quaternary structure, component of the small ribosomal subunit. Mature ribosomes consist of a small (40S) and a large (60S) subunit. The 40S subunit contains about 33 different proteins and 1 molecule of RNA (18S). The 60S subunit contains about 49 different proteins and 3 molecules of RNA (28S, 5.8S and 5S). Interacts with ribosomal protein S21.

The protein resides in the cytoplasm. Required for the assembly and/or stability of the 40S ribosomal subunit. Required for the processing of the 20S rRNA-precursor to mature 18S rRNA in a late step of the maturation of 40S ribosomal subunits. Binds laminin. This Echinococcus granulosus (Hydatid tapeworm) protein is Small ribosomal subunit protein uS2 (egmo3).